The sequence spans 221 residues: Thiamine-phosphate synthase (221 aa).

4-amino-2-methyl-5-(diphosphooxymethyl)pyrimidine contacts are provided by residues 47-51 (QYREK) and Asn-79. The Mg(2+) site is built by Asp-80 and Asp-99. Thr-118 lines the 4-amino-2-methyl-5-(diphosphooxymethyl)pyrimidine pocket. 144 to 146 (SFT) provides a ligand contact to 2-[(2R,5Z)-2-carboxy-4-methylthiazol-5(2H)-ylidene]ethyl phosphate. Lys-147 contacts 4-amino-2-methyl-5-(diphosphooxymethyl)pyrimidine. 2-[(2R,5Z)-2-carboxy-4-methylthiazol-5(2H)-ylidene]ethyl phosphate is bound by residues Gly-175 and 195–196 (VT).

It belongs to the thiamine-phosphate synthase family. Mg(2+) is required as a cofactor.

It catalyses the reaction 2-[(2R,5Z)-2-carboxy-4-methylthiazol-5(2H)-ylidene]ethyl phosphate + 4-amino-2-methyl-5-(diphosphooxymethyl)pyrimidine + 2 H(+) = thiamine phosphate + CO2 + diphosphate. It carries out the reaction 2-(2-carboxy-4-methylthiazol-5-yl)ethyl phosphate + 4-amino-2-methyl-5-(diphosphooxymethyl)pyrimidine + 2 H(+) = thiamine phosphate + CO2 + diphosphate. The catalysed reaction is 4-methyl-5-(2-phosphooxyethyl)-thiazole + 4-amino-2-methyl-5-(diphosphooxymethyl)pyrimidine + H(+) = thiamine phosphate + diphosphate. It participates in cofactor biosynthesis; thiamine diphosphate biosynthesis; thiamine phosphate from 4-amino-2-methyl-5-diphosphomethylpyrimidine and 4-methyl-5-(2-phosphoethyl)-thiazole: step 1/1. Condenses 4-methyl-5-(beta-hydroxyethyl)thiazole monophosphate (THZ-P) and 2-methyl-4-amino-5-hydroxymethyl pyrimidine pyrophosphate (HMP-PP) to form thiamine monophosphate (TMP). This is Thiamine-phosphate synthase from Caldicellulosiruptor saccharolyticus (strain ATCC 43494 / DSM 8903 / Tp8T 6331).